The primary structure comprises 104 residues: N(2)-fixation sustaining protein CowN (104 aa).

Belongs to the CowN family.

In terms of biological role, is required to sustain N(2)-dependent growth in the presence of low levels of carbon monoxide (CO). Probably acts by protecting the N(2) fixation ability of the nitrogenase complex, which is inactivated in the presence of CO. The chain is N(2)-fixation sustaining protein CowN from Arcobacter nitrofigilis (strain ATCC 33309 / DSM 7299 / CCUG 15893 / LMG 7604 / NCTC 12251 / CI) (Campylobacter nitrofigilis).